We begin with the raw amino-acid sequence, 132 residues long: Snaclec bothroinsularin subunit alpha (132 aa).

Cystine bridges form between Cys-2–Cys-13, Cys-30–Cys-127, and Cys-102–Cys-119. The C-type lectin domain occupies 9–128; the sequence is YGQYCYKFFQ…CGQQNPFVCK (120 aa).

It belongs to the snaclec family. In terms of assembly, heterodimer of subunits alpha and beta; disulfide-linked. As to expression, expressed by the venom gland.

Its subcellular location is the secreted. In terms of biological role, thrombin and prothrombin (F2) inhibitor. The IC(50) of thrombin-induced platelet aggregation and fibrinocoagulation is 62 and 35 nM, respectively. Its inhibitory activity is at least 10-fold lower than that observed for other thrombin inhibitors. The polypeptide is Snaclec bothroinsularin subunit alpha (Bothrops insularis (Golden lancehead)).